A 141-amino-acid chain; its full sequence is ATP synthase epsilon chain (141 aa).

Belongs to the ATPase epsilon chain family. As to quaternary structure, F-type ATPases have 2 components, CF(1) - the catalytic core - and CF(0) - the membrane proton channel. CF(1) has five subunits: alpha(3), beta(3), gamma(1), delta(1), epsilon(1). CF(0) has three main subunits: a, b and c.

It is found in the cell inner membrane. Its function is as follows. Produces ATP from ADP in the presence of a proton gradient across the membrane. This chain is ATP synthase epsilon chain, found in Burkholderia ambifaria (strain ATCC BAA-244 / DSM 16087 / CCUG 44356 / LMG 19182 / AMMD) (Burkholderia cepacia (strain AMMD)).